The following is a 212-amino-acid chain: Probable GTP-binding protein EngB (212 aa).

Residues 38 to 210 enclose the EngB-type G domain; the sequence is SLPEIAFVGK…KASLAKCIKP (173 aa). Residues 46-53, 73-77, 91-94, 158-161, and 189-191 each bind GTP; these read GKSNVGKS, GRTRQ, DLPG, TKSD, and VSN. Mg(2+) contacts are provided by serine 53 and threonine 75.

It belongs to the TRAFAC class TrmE-Era-EngA-EngB-Septin-like GTPase superfamily. EngB GTPase family. Mg(2+) serves as cofactor.

In terms of biological role, necessary for normal cell division and for the maintenance of normal septation. This Rickettsia africae (strain ESF-5) protein is Probable GTP-binding protein EngB.